A 216-amino-acid polypeptide reads, in one-letter code: Twisted gastrulation protein homolog 1-A (216 aa).

The first 25 residues, 1-25 (MKPSFLHIPAAALLLCSLWILPIYC), serve as a signal peptide directing secretion. N-linked (GlcNAc...) asparagine glycosylation is found at N52, N81, and N145.

Belongs to the twisted gastrulation protein family. In terms of assembly, binds directly to bmp2, bmp4 and bmp7 and can form a ternary complex with bmps and chordin, thus preventing the binding of bmps to their cell surface receptors. Posterior defects are induced by overexpression. This may arise through alteration of bmp4 or chrd function in the developing tailbud region.

It localises to the secreted. Involved in dorsal-ventral patterning, permitting peak BMP signaling by antagonizing the residual anti-BMP activity of the cleavage products of chrd. Functions to promote the formation of ventral mesoderm by increasing the activity of bmp7 and other BMPS. Seems to antagonize BMP signaling by forming ternary complexes with chrd and BMPs, thereby preventing BMPs from binding to their receptors. In addition to the anti-BMP function, also has pro-BMP activity, partly mediated by cleavage and degradation of chrd, which releases BMPs from ternary complexes. May be an important modulator of BMP-regulated cartilage development and chondrocyte differentiation. The polypeptide is Twisted gastrulation protein homolog 1-A (twsg1-a) (Xenopus laevis (African clawed frog)).